Reading from the N-terminus, the 104-residue chain is Large ribosomal subunit protein uL23 (104 aa).

It belongs to the universal ribosomal protein uL23 family. Part of the 50S ribosomal subunit. Contacts protein L29, and trigger factor when it is bound to the ribosome.

In terms of biological role, one of the early assembly proteins it binds 23S rRNA. One of the proteins that surrounds the polypeptide exit tunnel on the outside of the ribosome. Forms the main docking site for trigger factor binding to the ribosome. The chain is Large ribosomal subunit protein uL23 from Nostoc sp. (strain PCC 7120 / SAG 25.82 / UTEX 2576).